Here is a 296-residue protein sequence, read N- to C-terminus: Phosphatidylglycerol--prolipoprotein diacylglyceryl transferase (296 aa).

The tract at residues 1–21 (MRHRRRPGGRSTAGGTPVSQL) is disordered. The next 7 helical transmembrane spans lie at 34 to 54 (GPLT…VAYI), 72 to 92 (ELCA…HVIT), 108 to 128 (FFIW…GLAI), 136 to 158 (GIRF…AIGR), 195 to 215 (FHPT…FLLW), 227 to 243 (LFTL…FWVE), and 258 to 278 (LNDV…IVLQ). Arg158 provides a ligand contact to a 1,2-diacyl-sn-glycero-3-phospho-(1'-sn-glycerol).

It belongs to the Lgt family.

The protein localises to the cell membrane. The enzyme catalyses L-cysteinyl-[prolipoprotein] + a 1,2-diacyl-sn-glycero-3-phospho-(1'-sn-glycerol) = an S-1,2-diacyl-sn-glyceryl-L-cysteinyl-[prolipoprotein] + sn-glycerol 1-phosphate + H(+). The protein operates within protein modification; lipoprotein biosynthesis (diacylglyceryl transfer). Functionally, catalyzes the transfer of the diacylglyceryl group from phosphatidylglycerol to the sulfhydryl group of the N-terminal cysteine of a prolipoprotein, the first step in the formation of mature lipoproteins. The sequence is that of Phosphatidylglycerol--prolipoprotein diacylglyceryl transferase from Cutibacterium acnes (strain DSM 16379 / KPA171202) (Propionibacterium acnes).